The primary structure comprises 34 residues: Papillosin (34 aa).

Has strong antibacterial activity against the Gram-positive bacteria M.luteus, S.aureus, B.megaterium, A.viridans and E.faecalis, and against the Gram-negative bacteria K.pneumoniae, E.coli DH5alpha, S.typhimurium, P.aeruginosa and E.aerogenes. Lacks hemolytic activity against sheep erythrocytes. This is Papillosin from Halocynthia papillosa (Red sea-squirt).